We begin with the raw amino-acid sequence, 368 residues long: Phosphate acyltransferase (368 aa).

The tract at residues 334 to 368 (EGSLEQAARDASGAGHASPIAGQPAEPYAAQSSKA) is disordered.

It belongs to the PlsX family. Homodimer. Probably interacts with PlsY.

It localises to the cytoplasm. The catalysed reaction is a fatty acyl-[ACP] + phosphate = an acyl phosphate + holo-[ACP]. It functions in the pathway lipid metabolism; phospholipid metabolism. In terms of biological role, catalyzes the reversible formation of acyl-phosphate (acyl-PO(4)) from acyl-[acyl-carrier-protein] (acyl-ACP). This enzyme utilizes acyl-ACP as fatty acyl donor, but not acyl-CoA. This Paraburkholderia xenovorans (strain LB400) protein is Phosphate acyltransferase.